An 89-amino-acid polypeptide reads, in one-letter code: Small ribosomal subunit protein uS15 (89 aa).

It belongs to the universal ribosomal protein uS15 family. Part of the 30S ribosomal subunit. Forms a bridge to the 50S subunit in the 70S ribosome, contacting the 23S rRNA.

In terms of biological role, one of the primary rRNA binding proteins, it binds directly to 16S rRNA where it helps nucleate assembly of the platform of the 30S subunit by binding and bridging several RNA helices of the 16S rRNA. Its function is as follows. Forms an intersubunit bridge (bridge B4) with the 23S rRNA of the 50S subunit in the ribosome. The sequence is that of Small ribosomal subunit protein uS15 from Parafrankia sp. (strain EAN1pec).